Here is a 410-residue protein sequence, read N- to C-terminus: Interstrand DNA cross-link repair glycosylase (410 aa).

The short motif at 45–47 (QID) is the QXD; important for activity element.

The protein belongs to the DNA glycosylase AlkZ-like family.

DNA glycosylase involved in the repair of interstrand DNA cross-links (ICLs), which are highly toxic DNA lesions that covalently tether the opposing strands of DNA, thereby inhibiting essential cellular processes such as DNA replication and transcription. Acts by unhooking both sides of the ICLs, forming abasic (AP) sites on both strands. Unhooks ICLs derived from various cross-linking agents, including azinomycin B (AZB) and mechlorethamine, also known as nitrogen mustard (NM), protecting cells from the toxicity of these cross-linking agents. In vitro, also acts on monoadducts and can catalyze the excision of N7-methylguanine (7mGua) from an oligonucleotide containing N7-methyldeoxyguanosine (d7mG). Shows no unhooking activity toward FaPy-ICLs. The chain is Interstrand DNA cross-link repair glycosylase (ycaQ) from Escherichia coli (strain K12).